The primary structure comprises 178 residues: Sec-independent protein translocase protein TatB (178 aa).

The chain crosses the membrane as a helical span at residues 1 to 21 (MFDIGWSELLVIGVVALIAIG). Residues 146–178 (LAIVREIKPEPQPQPADGAAPAEPERLKDAKAS) form a disordered region. Residues 168-178 (EPERLKDAKAS) show a composition bias toward basic and acidic residues.

The protein belongs to the TatB family. In terms of assembly, the Tat system comprises two distinct complexes: a TatABC complex, containing multiple copies of TatA, TatB and TatC subunits, and a separate TatA complex, containing only TatA subunits. Substrates initially bind to the TatABC complex, which probably triggers association of the separate TatA complex to form the active translocon.

It is found in the cell inner membrane. Its function is as follows. Part of the twin-arginine translocation (Tat) system that transports large folded proteins containing a characteristic twin-arginine motif in their signal peptide across membranes. Together with TatC, TatB is part of a receptor directly interacting with Tat signal peptides. TatB may form an oligomeric binding site that transiently accommodates folded Tat precursor proteins before their translocation. The sequence is that of Sec-independent protein translocase protein TatB from Bradyrhizobium sp. (strain ORS 278).